A 477-amino-acid polypeptide reads, in one-letter code: Transmembrane and coiled-coil domain protein 3 (477 aa).

Ser-46 carries the phosphoserine modification. The stretch at Lys-112–Lys-153 forms a coiled coil. Disordered regions lie at residues Lys-168 to Met-188 and Pro-249 to Gly-277. Ser-253 carries the post-translational modification Phosphoserine. Residues Ser-258 to Phe-273 are compositionally biased toward polar residues. The stretch at Asp-282–Gln-398 forms a coiled coil. A run of 2 helical transmembrane segments spans residues Val-417–Ser-437 and Phe-450–Ile-470.

The protein belongs to the TEX28 family. In terms of assembly, may form homodimers and heterodimers with TMCC2 or TMCC3 via the coiled-coil domains. Interacts with ribosomal proteins RPL4 and RPS6. In terms of tissue distribution, widely expressed, with highest levels in brain, spinal cord and testis.

The protein localises to the endoplasmic reticulum membrane. In Homo sapiens (Human), this protein is Transmembrane and coiled-coil domain protein 3.